Here is an 87-residue protein sequence, read N- to C-terminus: Small ribosomal subunit protein uS15 (87 aa).

It belongs to the universal ribosomal protein uS15 family. As to quaternary structure, part of the 30S ribosomal subunit. Forms a bridge to the 50S subunit in the 70S ribosome, contacting the 23S rRNA.

One of the primary rRNA binding proteins, it binds directly to 16S rRNA where it helps nucleate assembly of the platform of the 30S subunit by binding and bridging several RNA helices of the 16S rRNA. Its function is as follows. Forms an intersubunit bridge (bridge B4) with the 23S rRNA of the 50S subunit in the ribosome. This chain is Small ribosomal subunit protein uS15, found in Dehalococcoides mccartyi (strain ATCC BAA-2100 / JCM 16839 / KCTC 5957 / BAV1).